Here is a 202-residue protein sequence, read N- to C-terminus: Cytochrome c biogenesis ATP-binding export protein CcmA (202 aa).

The region spanning 3–200 is the ABC transporter domain; it reads LAAENLSGER…EGTQELKMGA (198 aa). Residue 35–42 coordinates ATP; it reads GPNGAGKS.

The protein belongs to the ABC transporter superfamily. CcmA exporter (TC 3.A.1.107) family. As to quaternary structure, the complex is composed of two ATP-binding proteins (CcmA) and two transmembrane proteins (CcmB).

The protein localises to the cell inner membrane. The enzyme catalyses heme b(in) + ATP + H2O = heme b(out) + ADP + phosphate + H(+). In terms of biological role, part of the ABC transporter complex CcmAB involved in the biogenesis of c-type cytochromes; once thought to export heme, this seems not to be the case, but its exact role is uncertain. Responsible for energy coupling to the transport system. This Chelativorans sp. (strain BNC1) protein is Cytochrome c biogenesis ATP-binding export protein CcmA.